Consider the following 687-residue polypeptide: Adhesion G-protein coupled receptor G1 (687 aa).

Residues 1-25 form the signal peptide; it reads MTAQSLLQTTLFLLSLLFLVQGAHG. Position 26-33 (26-33) interacts with heparin; that stretch reads RGHREDFR. The Extracellular segment spans residues 26 to 402; the sequence is RGHREDFRFC…VEVDAVHKHY (377 aa). 2 disulfides stabilise this stretch: Cys35–Cys91 and Cys121–Cys177. N-linked (GlcNAc...) asparagine glycans are attached at residues Asn39, Asn148, and Asn171. Heparin is bound at residue 190–200; the sequence is LKHPQKASRRP. Positions 224 to 395 constitute a GAIN-B domain; it reads DTVSFEEDRI…AVLMVSSVEV (172 aa). 4 N-linked (GlcNAc...) asparagine glycosylation sites follow: Asn234, Asn303, Asn324, and Asn341. 2 cysteine pairs are disulfide-bonded: Cys346–Cys377 and Cys366–Cys379. Residues 346–395 form a GPS region; sequence CVFWVEDPTLSSPGHWSSAGCETVRRETQTSCFCNHLTYFAVLMVSSVEV. The stachel stretch occupies residues 384-397; sequence YFAVLMVSSVEVDA. A helical transmembrane segment spans residues 403–423; it reads LSLLSYVGCVVSALACIVTIA. The Cytoplasmic segment spans residues 424–442; that stretch reads AYLCSRRKPRDYTIKVHMN. A helical membrane pass occupies residues 443–463; sequence LLLAVFLLDTSFLLSEPVALT. Topologically, residues 464–470 are extracellular; that stretch reads GSEAGCR. Residues 471 to 491 traverse the membrane as a helical segment; that stretch reads ASAIFLHFSLLACLSWMGLEG. Residues 492-512 lie on the Cytoplasmic side of the membrane; sequence YNLYRLVVEVFGTYVPGYLLK. The chain crosses the membrane as a helical span at residues 513-533; the sequence is LSAMGWGFPIFLVTLVALVDV. At 534–570 the chain is on the extracellular side; it reads DNYGPIILAVHRTPEGVIYPSMCWIRDSLVSYITNLG. Residues 571-591 traverse the membrane as a helical segment; that stretch reads LFSLVFLFNMAMLATMVVQIL. Residues 592–603 lie on the Cytoplasmic side of the membrane; it reads RLRPHTQKWSHV. Residues 604–624 form a helical membrane-spanning segment; sequence LTLLGLSLVLGLPWALIFFSF. Residues 625 to 630 are Extracellular-facing; it reads ASGTFQ. Residues 631–651 form a helical membrane-spanning segment; that stretch reads LVVLYLFSIITSFQGFLIFIW. Residues 652–687 lie on the Cytoplasmic side of the membrane; sequence YWSMRLQARGGPSPLKSNSDSARLPISSGSTSSSRI. Positions 664–687 are disordered; the sequence is SPLKSNSDSARLPISSGSTSSSRI. The segment covering 678 to 687 has biased composition (low complexity); it reads SSGSTSSSRI.

This sequence belongs to the G-protein coupled receptor 2 family. LN-TM7 subfamily. In terms of assembly, heterodimer of 2 chains generated by proteolytic processing; the large extracellular N-terminal fragment (ADGRG1 NT) and the membrane-bound C-terminal fragment (ADGRG1-CT) predominantly remain associated and non-covalently linked. ADGRG1 NT self-associates in a trans-trans manner; the homophilic interaction enhances receptor signaling. Interacts with TGM2. Interacts with heparin; leading to the reduction of ADGRG1 shedding. Interacts with COL3A1. Part of a GPCR-tetraspanin complex at least consisting of ADGRG1, CD81, eventually CD9, and GNA11 in which CD81 is enhancing the association of ADGRG1 with GNA11. Post-translationally, autoproteolytically cleaved into 2 fragments; the large extracellular N-terminal fragment (ADGRG1 NT) and the membrane-bound C-terminal fragment (ADGRG1 CT) predominantly remain associated and non-covalently linked. Shedding to yield the secreted ADGRG1 N-terminal fragment seems to involve metalloprotease(s). In terms of processing, ubiquitinated. Undergoes polyubiquitination upon activation.

It is found in the cell membrane. The protein localises to the secreted. It localises to the membrane raft. Its activity is regulated as follows. Forms a heterodimer of 2 chains generated by proteolytic processing that remain associated through non-covalent interactions mediated by the GAIN-B domain. In the inactivated receptor, the Stachel sequence (also named stalk) is embedded in the GAIN-B domain, where it adopts a beta-strand conformation. On activation, the Stachel moves into the 7 transmembrane region and adopts a twisted hook-shaped configuration that forms contacts within the receptor, leading to coupling of a G-alpha protein, which activates signaling. The cleaved GAIN-B and N-terminal domains can then dissociate from the rest of the receptor. In terms of biological role, adhesion G-protein coupled receptor (aGPCR) for steroid hormone 17alpha-hydroxypregnenolone (17-OH), which is involved in cell adhesion and cell-cell interactions. Ligand binding causes a conformation change that triggers signaling via guanine nucleotide-binding proteins (G proteins) and modulates the activity of downstream effectors, such as RhoA pathway. ADGRG1 is coupled to G(12) and/or G(13) G proteins (GNA12 and GNA13, respectively) and mediates the activation Rho small GTPases. Acts as a potent suppressor of ferroptosis: binding to 17-OH-binding initiates signaling that down-regulates CD36 and alleviates ferroptosis-induced liver injury. Ligand-binding also induces cell adhesion activity via association with proteins such as collagen III/COL3A1 and TGM2. Mediates cell matrix adhesion in developing neurons and hematopoietic stem cells. Involved in cortical development, specifically in maintenance of the pial basement membrane integrity and in cortical lamination: association with COL3A1 in the developing brain inhibits neuronal migration via activation of the RhoA pathway. Together with TGM2, acts as a regulator of myelination and myelin repair in oligodendrocyte precursor cells. Acts as a hemostatic sensor of shear force: G protein-coupled receptor signaling is activated in response to shear force in platelets, promoting G(13) G protein signaling, and platelet shape change and aggregation in a COL3A1-dependent manner. Acts as an inhibitor of VEGFA production thereby inhibiting angiogenesis through a signaling pathway mediated by PRKCA. Plays a role in the maintenance of hematopoietic stem cells in bone marrow niche. Plays an essential role in testis development. This chain is Adhesion G-protein coupled receptor G1 (ADGRG1), found in Gorilla gorilla gorilla (Western lowland gorilla).